The following is a 165-amino-acid chain: Probable chemoreceptor glutamine deamidase CheD (165 aa).

It belongs to the CheD family.

It carries out the reaction L-glutaminyl-[protein] + H2O = L-glutamyl-[protein] + NH4(+). Probably deamidates glutamine residues to glutamate on methyl-accepting chemotaxis receptors (MCPs), playing an important role in chemotaxis. This is Probable chemoreceptor glutamine deamidase CheD from Geobacillus kaustophilus (strain HTA426).